A 200-amino-acid chain; its full sequence is dITP/XTP pyrophosphatase (200 aa).

A substrate-binding site is contributed by 8–13; the sequence is THNPNK. The Mg(2+) site is built by glutamate 41 and aspartate 71. Aspartate 71 acts as the Proton acceptor in catalysis. Residues threonine 72, 153–156, lysine 176, and 181–182 contribute to the substrate site; these read FGYD and HR.

The protein belongs to the HAM1 NTPase family. Homodimer. Mg(2+) serves as cofactor.

The catalysed reaction is XTP + H2O = XMP + diphosphate + H(+). It carries out the reaction dITP + H2O = dIMP + diphosphate + H(+). It catalyses the reaction ITP + H2O = IMP + diphosphate + H(+). Functionally, pyrophosphatase that catalyzes the hydrolysis of nucleoside triphosphates to their monophosphate derivatives, with a high preference for the non-canonical purine nucleotides XTP (xanthosine triphosphate), dITP (deoxyinosine triphosphate) and ITP. Seems to function as a house-cleaning enzyme that removes non-canonical purine nucleotides from the nucleotide pool, thus preventing their incorporation into DNA/RNA and avoiding chromosomal lesions. The protein is dITP/XTP pyrophosphatase of Caldanaerobacter subterraneus subsp. tengcongensis (strain DSM 15242 / JCM 11007 / NBRC 100824 / MB4) (Thermoanaerobacter tengcongensis).